A 217-amino-acid polypeptide reads, in one-letter code: Somatotropin (217 aa).

The N-terminal stretch at 1–27 (MMAAGPRTSLLLAFTLLCLPWTQVVGA) is a signal peptide. Residue H46 coordinates Zn(2+). Residues C79 and C190 are joined by a disulfide bond. A Phosphoserine modification is found at S132. E199 contacts Zn(2+). The cysteines at positions 207 and 215 are disulfide-linked.

The protein belongs to the somatotropin/prolactin family.

It is found in the secreted. Plays an important role in growth control. Its major role in stimulating body growth is to stimulate the liver and other tissues to secrete IGF1. It stimulates both the differentiation and proliferation of myoblasts. It also stimulates amino acid uptake and protein synthesis in muscle and other tissues. This Capra hircus (Goat) protein is Somatotropin (GH1).